A 530-amino-acid chain; its full sequence is Cation channel sperm-associated protein 2 (530 aa).

Topologically, residues M1–P108 are cytoplasmic. The helical transmembrane segment at L109–L131 threads the bilayer. Residues L132–W140 are Extracellular-facing. Residues P141–L166 traverse the membrane as a helical segment. Topologically, residues S167 to S175 are cytoplasmic. The helical transmembrane segment at A176–T200 threads the bilayer. Topologically, residues G201–S203 are extracellular. A helical transmembrane segment spans residues V204–A222. Over Q223 to K239 the chain is Cytoplasmic. A helical membrane pass occupies residues S240–V262. At F263 to S281 the chain is on the extracellular side. The helical; Pore-forming intramembrane region spans D282–F294. The Extracellular segment spans residues T295–R314. Residues I315 to V341 traverse the membrane as a helical segment. Residues T342 to K530 lie on the Cytoplasmic side of the membrane. Residues M378 to E458 form a disordered region. Residues K429–Y440 are compositionally biased toward basic and acidic residues. Residues S442–E458 show a composition bias toward low complexity.

Belongs to the cation channel sperm-associated (TC 1.A.1.19) family. Component of the CatSper complex or CatSpermasome composed of the core pore-forming members CATSPER1, CATSPER2, CATSPER3 and CATSPER4 as well as auxiliary members CATSPERB, CATSPERG, CATSPERD, CATSPERE, CATSPERZ, C2CD6/CATSPERT, TMEM249, TMEM262 and EFCAB9. HSPA1 may be an additional auxiliary complex member. The core complex members CATSPER1, CATSPER2, CATSPER3 and CATSPER4 form a heterotetrameric channel. The auxiliary CATSPERB, CATSPERG, CATSPERD and CATSPERE subunits form a pavilion-like structure over the pore which stabilizes the complex through interactions with CATSPER4, CATSPER3, CATSPER1 and CATSPER2 respectively. TMEM262/CATSPERH interacts with CATSPERB, further stabilizing the complex. C2CD6/CATSPERT interacts at least with CATSPERD and is required for targeting the CatSper complex in the flagellar membrane. Interacts with Ca(v)3.3/CACNA1I, leading to suppression of T-type calcium channel activity. In terms of tissue distribution, testis-specific.

It localises to the cell projection. It is found in the cilium. Its subcellular location is the flagellum membrane. The enzyme catalyses Ca(2+)(in) = Ca(2+)(out). With respect to regulation, the CatSper calcium channel is indirectly activated by extracellular progesterone and prostaglandins following the sequence: progesterone &gt; PGF1-alpha = PGE1 &gt; PGA1 &gt; PGE2 &gt;&gt; PGD2. The CatSper calcium channel is directly inhibited by endocannabinoid 2-arachidonoylglycerol (2AG). Indirect activation by progesterone takes place via the following mechanism: progesterone binds and activates the acylglycerol lipase ABHD2, which in turn mediates hydrolysis of 2AG inhibitor, relieving inhibition of the CatSper channel. The primary effect of progesterone activation is to shift voltage dependence towards more physiological, negative membrane potentials; it is not mediated by metabotropic receptors and second messengers. Sperm capacitation enhances the effect of progesterone by providing additional negative shift. Also activated by the elevation of intracellular pH. Functionally, pore-forming subunit of the CatSper complex, a sperm-specific voltage-gated calcium channel, that plays a central role in calcium-dependent physiological responses essential for successful fertilization, such as sperm hyperactivation, acrosome reaction and chemotaxis towards the oocyte. In Homo sapiens (Human), this protein is Cation channel sperm-associated protein 2 (CATSPER2).